Here is a 348-residue protein sequence, read N- to C-terminus: Ion-translocating oxidoreductase complex subunit D (348 aa).

A run of 3 helical transmembrane segments spans residues 20-39, 72-91, and 120-140; these read LMKW…TYFF, ALRD…AIPP, and PFNP…VQMT. At threonine 187 the chain carries FMN phosphoryl threonine. Helical transmembrane passes span 214–234, 241–261, 266–286, 300–320, and 321–341; these read LAGV…LVLI, WHIP…FLMF, TASP…FFIA, LVFG…GGFP, and DGVA…DYYT.

The protein belongs to the NqrB/RnfD family. In terms of assembly, the complex is composed of six subunits: RnfA, RnfB, RnfC, RnfD, RnfE and RnfG. Requires FMN as cofactor.

The protein resides in the cell inner membrane. Functionally, part of a membrane-bound complex that couples electron transfer with translocation of ions across the membrane. This Vibrio atlanticus (strain LGP32) (Vibrio splendidus (strain Mel32)) protein is Ion-translocating oxidoreductase complex subunit D.